The following is a 230-amino-acid chain: MSERAPVVTIDGPSGAGKGTISQLLAQHLGWQLLDSGAIYRVLALAAIHHDVELENEESITLLAAHLDVKFLTGNDKDPVQVILEGEDVTTDIRTQECSNAASKVAAFPRVREALLRRQRAFRTAPGLIADGRDMGTVVFPTAPAKLYLTASAEERAQRRYNQLQDKGFDVNIERLLSEIIERDERDMNRPVAPLVPAEDAFVIDTSGKGIDEVLELALKYINEKLSSAN.

ATP is bound at residue 12 to 20 (GPSGAGKGT).

The protein belongs to the cytidylate kinase family. Type 1 subfamily.

It is found in the cytoplasm. The enzyme catalyses CMP + ATP = CDP + ADP. The catalysed reaction is dCMP + ATP = dCDP + ADP. The chain is Cytidylate kinase from Shewanella putrefaciens (strain CN-32 / ATCC BAA-453).